Reading from the N-terminus, the 179-residue chain is Methylated-DNA--protein-cysteine methyltransferase (179 aa).

Residue C130 is the Nucleophile; methyl group acceptor of the active site.

The protein belongs to the MGMT family.

The protein resides in the cytoplasm. The enzyme catalyses a 6-O-methyl-2'-deoxyguanosine in DNA + L-cysteinyl-[protein] = S-methyl-L-cysteinyl-[protein] + a 2'-deoxyguanosine in DNA. It carries out the reaction a 4-O-methyl-thymidine in DNA + L-cysteinyl-[protein] = a thymidine in DNA + S-methyl-L-cysteinyl-[protein]. In terms of biological role, involved in the cellular defense against the biological effects of O6-methylguanine (O6-MeG) and O4-methylthymine (O4-MeT) in DNA. Repairs the methylated nucleobase in DNA by stoichiometrically transferring the methyl group to a cysteine residue in the enzyme. This is a suicide reaction: the enzyme is irreversibly inactivated. This chain is Methylated-DNA--protein-cysteine methyltransferase, found in Haemophilus influenzae (strain ATCC 51907 / DSM 11121 / KW20 / Rd).